The chain runs to 400 residues: CinA-like protein (400 aa).

The protein belongs to the CinA family.

The chain is CinA-like protein from Shigella flexneri.